A 938-amino-acid chain; its full sequence is Isoleucine--tRNA ligase (938 aa).

Residues 58 to 68 (PYANGSIHIGH) carry the 'HIGH' region motif. Position 183 is an N6-acetyllysine (Lys183). Position 561 (Glu561) interacts with L-isoleucyl-5'-AMP. The short motif at 602-606 (KMSKS) is the 'KMSKS' region element. Lys605 contacts ATP. Zn(2+) contacts are provided by Cys901, Cys904, Cys921, and Cys924.

The protein belongs to the class-I aminoacyl-tRNA synthetase family. IleS type 1 subfamily. As to quaternary structure, monomer. Requires Zn(2+) as cofactor.

It is found in the cytoplasm. The enzyme catalyses tRNA(Ile) + L-isoleucine + ATP = L-isoleucyl-tRNA(Ile) + AMP + diphosphate. Its function is as follows. Catalyzes the attachment of isoleucine to tRNA(Ile). As IleRS can inadvertently accommodate and process structurally similar amino acids such as valine, to avoid such errors it has two additional distinct tRNA(Ile)-dependent editing activities. One activity is designated as 'pretransfer' editing and involves the hydrolysis of activated Val-AMP. The other activity is designated 'posttransfer' editing and involves deacylation of mischarged Val-tRNA(Ile). This chain is Isoleucine--tRNA ligase, found in Escherichia coli (strain 55989 / EAEC).